Reading from the N-terminus, the 478-residue chain is Secretogranin-3 (478 aa).

A signal peptide spans 1–21 (MASKRLGFVVVLALVCQHINA). 2 disordered regions span residues 22–126 (FPTP…NGMD) and 208–287 (IGDR…EDGL). Positions 28-42 (PDDKYNRELTEEKPL) are enriched in basic and acidic residues. Over residues 63–74 (AEEETNSEDDDI) the composition is skewed to acidic residues. Residues 97-120 (ANERLGADDTDSTKNRRLADDYDS) are compositionally biased toward basic and acidic residues. Over residues 235 to 259 (DEEDEVENEGGDDANGDEPQEEESR) the composition is skewed to acidic residues.

The protein resides in the cytoplasmic vesicle. Its subcellular location is the secretory vesicle lumen. The protein localises to the secretory vesicle membrane. It localises to the secreted. In Danio rerio (Zebrafish), this protein is Secretogranin-3 (scg3).